Reading from the N-terminus, the 130-residue chain is WAP four-disulfide core domain protein 3 (130 aa).

An N-terminal signal peptide occupies residues 1–16; it reads MKALLALGFLASWVAA. 2 consecutive WAP domains span residues 17 to 61 and 62 to 106; these read GEHA…RGDI and EGGR…IPGL. 8 disulfides stabilise this stretch: cysteine 25/cysteine 49, cysteine 32/cysteine 53, cysteine 36/cysteine 48, cysteine 42/cysteine 57, cysteine 69/cysteine 94, cysteine 77/cysteine 98, cysteine 81/cysteine 93, and cysteine 87/cysteine 102. A glycan (N-linked (GlcNAc...) asparagine) is linked at asparagine 116.

It localises to the secreted. The polypeptide is WAP four-disulfide core domain protein 3 (Wfdc3) (Mus musculus (Mouse)).